The following is a 1297-amino-acid chain: Phosphoribosylformylglycinamidine synthase (1297 aa).

ATP-binding positions include 307–318 (GASTGSGGEIRD) and A678. Residues E718, N722, and D886 each coordinate Mg(2+). The region spanning 1044–1297 (MAILREQGVN…MFQNARKYFG (254 aa)) is the Glutamine amidotransferase type-1 domain. C1137 (nucleophile) is an active-site residue. Active-site residues include H1262 and E1264.

The protein in the N-terminal section; belongs to the FGAMS family. In terms of assembly, monomer.

Its subcellular location is the cytoplasm. The enzyme catalyses N(2)-formyl-N(1)-(5-phospho-beta-D-ribosyl)glycinamide + L-glutamine + ATP + H2O = 2-formamido-N(1)-(5-O-phospho-beta-D-ribosyl)acetamidine + L-glutamate + ADP + phosphate + H(+). Its pathway is purine metabolism; IMP biosynthesis via de novo pathway; 5-amino-1-(5-phospho-D-ribosyl)imidazole from N(2)-formyl-N(1)-(5-phospho-D-ribosyl)glycinamide: step 1/2. Its function is as follows. Phosphoribosylformylglycinamidine synthase involved in the purines biosynthetic pathway. Catalyzes the ATP-dependent conversion of formylglycinamide ribonucleotide (FGAR) and glutamine to yield formylglycinamidine ribonucleotide (FGAM) and glutamate. In Vibrio cholerae serotype O1 (strain ATCC 39315 / El Tor Inaba N16961), this protein is Phosphoribosylformylglycinamidine synthase.